The primary structure comprises 365 residues: Protein RecA (365 aa).

Residue 81-88 (GPESSGKT) participates in ATP binding.

Belongs to the RecA family.

The protein resides in the cytoplasm. Its function is as follows. Can catalyze the hydrolysis of ATP in the presence of single-stranded DNA, the ATP-dependent uptake of single-stranded DNA by duplex DNA, and the ATP-dependent hybridization of homologous single-stranded DNAs. It interacts with LexA causing its activation and leading to its autocatalytic cleavage. This Borreliella burgdorferi (strain ATCC 35210 / DSM 4680 / CIP 102532 / B31) (Borrelia burgdorferi) protein is Protein RecA.